Consider the following 281-residue polypeptide: Probable feruloyl esterase A (281 aa).

Positions 1–21 (MKNFFSMHAILLACSAGAGLA) are cleaved as a signal peptide. 3 cysteine pairs are disulfide-bonded: Cys50/Cys279, Cys112/Cys115, and Cys248/Cys255. Asp98 provides a ligand contact to substrate. An N-linked (GlcNAc...) asparagine glycan is attached at Asn100. Tyr101 provides a ligand contact to substrate. Ser154 acts as the Nucleophile in catalysis. Asn173 is a glycosylation site (N-linked (GlcNAc...) asparagine). Catalysis depends on Asp215, which acts as the Charge relay system. Substrate is bound at residue His268. The active-site Charge relay system is His268.

It belongs to the AB hydrolase superfamily. FaeA family.

The protein localises to the secreted. The catalysed reaction is feruloyl-polysaccharide + H2O = ferulate + polysaccharide.. Its function is as follows. Involved in degradation of plant cell walls. Hydrolyzes the feruloyl-arabinose ester bond in arabinoxylans, and the feruloyl-galactose ester bond in pectin. This is Probable feruloyl esterase A (faeA) from Aspergillus oryzae (strain ATCC 42149 / RIB 40) (Yellow koji mold).